We begin with the raw amino-acid sequence, 656 residues long: Protein arginine N-methyltransferase 7 (656 aa).

SAM-dependent MTase PRMT-type domains lie at 12 to 338 and 343 to 656; these read EREW…FSIW and GKDS…QSGN.

It belongs to the class I-like SAM-binding methyltransferase superfamily. Protein arginine N-methyltransferase family. PRMT7 subfamily.

Its function is as follows. Arginine methyltransferase that can both catalyze the formation of omega-N monomethylarginine (MMA) and symmetrical dimethylarginine (sDMA). The protein is Protein arginine N-methyltransferase 7 (prmt-7) of Caenorhabditis briggsae.